We begin with the raw amino-acid sequence, 505 residues long: Nostrin (505 aa).

The F-BAR domain occupies 1-260 (MRDPLTDCSY…AISKIDIEKD (260 aa)). 3 coiled-coil regions span residues 101-128 (AHQV…LVIS), 160-222 (ITTE…RIQL), and 295-332 (KERQ…AYSS). Ser114 bears the Phosphoserine mark. The REM-1 domain maps to 292–372 (AMSKERQTSS…SYKLSSVLAE (81 aa)). Residues 437–496 (LGNGLCKALYPFQARQDDELDLEKGDIVTIHKKKDEGWWFGSLKGKKGHFPAAYVEELPL) enclose the SH3 domain. Ser478 carries the phosphoserine modification.

Homotrimer. Interacts with DAB2. Interacts with NOS3, DNM2, WASL and CAV1. Interacts (via SH3 domain) with DNM2; this interaction allows the recruitment of NOS3 to dynamin-positive structures. In terms of tissue distribution, present in pulmonary arterial endothelial cells (at protein level).

Its subcellular location is the cell membrane. The protein resides in the cytoplasmic vesicle. It localises to the cytoplasm. The protein localises to the cytoskeleton. In terms of biological role, multivalent adapter protein which may decrease NOS3 activity by inducing its translocation away from the plasma membrane. The sequence is that of Nostrin from Bos taurus (Bovine).